A 78-amino-acid polypeptide reads, in one-letter code: Large ribosomal subunit protein bL28 (78 aa).

It belongs to the bacterial ribosomal protein bL28 family.

This chain is Large ribosomal subunit protein bL28, found in Rippkaea orientalis (strain PCC 8801 / RF-1) (Cyanothece sp. (strain PCC 8801)).